Consider the following 502-residue polypeptide: tRNA-2-methylthio-N(6)-dimethylallyladenosine synthase (502 aa).

An MTTase N-terminal domain is found at 12–129 (RTYQVRTYGC…LPVLLERARH (118 aa)). Positions 21, 58, 92, 166, 170, and 173 each coordinate [4Fe-4S] cluster. A Radical SAM core domain is found at 152-383 (RESTYAGWVS…ACVEEITWAE (232 aa)). In terms of domain architecture, TRAM spans 385–455 (RRLVGETVEV…PHHLNADGEP (71 aa)). The interval 451–502 (ADGEPLAHRRTPAGDAAEAGRRPRTAGVSLGLPTVGAPPSPVPPAASSACAC) is disordered.

This sequence belongs to the methylthiotransferase family. MiaB subfamily. As to quaternary structure, monomer. The cofactor is [4Fe-4S] cluster.

Its subcellular location is the cytoplasm. The catalysed reaction is N(6)-dimethylallyladenosine(37) in tRNA + (sulfur carrier)-SH + AH2 + 2 S-adenosyl-L-methionine = 2-methylsulfanyl-N(6)-dimethylallyladenosine(37) in tRNA + (sulfur carrier)-H + 5'-deoxyadenosine + L-methionine + A + S-adenosyl-L-homocysteine + 2 H(+). Functionally, catalyzes the methylthiolation of N6-(dimethylallyl)adenosine (i(6)A), leading to the formation of 2-methylthio-N6-(dimethylallyl)adenosine (ms(2)i(6)A) at position 37 in tRNAs that read codons beginning with uridine. The protein is tRNA-2-methylthio-N(6)-dimethylallyladenosine synthase of Salinispora arenicola (strain CNS-205).